The sequence spans 577 residues: Arginine--tRNA ligase (577 aa).

Positions 123-133 (PNLAKEMHVGH) match the 'HIGH' region motif.

Belongs to the class-I aminoacyl-tRNA synthetase family. Monomer.

The protein localises to the cytoplasm. The catalysed reaction is tRNA(Arg) + L-arginine + ATP = L-arginyl-tRNA(Arg) + AMP + diphosphate. The sequence is that of Arginine--tRNA ligase from Marinomonas sp. (strain MWYL1).